Reading from the N-terminus, the 347-residue chain is Magnesium-protoporphyrin IX monomethyl ester [oxidative] cyclase (347 aa).

It belongs to the AcsF family. It depends on Fe cation as a cofactor.

It catalyses the reaction Mg-protoporphyrin IX 13-monomethyl ester + 3 NADPH + 3 O2 + 2 H(+) = 3,8-divinyl protochlorophyllide a + 3 NADP(+) + 5 H2O. Its pathway is porphyrin-containing compound metabolism; chlorophyll biosynthesis (light-independent). Its function is as follows. Catalyzes the formation of the isocyclic ring in chlorophyll biosynthesis. Mediates the cyclase reaction, which results in the formation of divinylprotochlorophyllide (Pchlide) characteristic of all chlorophylls from magnesium-protoporphyrin IX 13-monomethyl ester (MgPMME). The protein is Magnesium-protoporphyrin IX monomethyl ester [oxidative] cyclase of Prochlorococcus marinus (strain SARG / CCMP1375 / SS120).